Reading from the N-terminus, the 451-residue chain is UDP-N-acetylmuramoylalanine--D-glutamate ligase (451 aa).

Residue 118–124 (GTKGKST) coordinates ATP.

The protein belongs to the MurCDEF family.

Its subcellular location is the cytoplasm. The catalysed reaction is UDP-N-acetyl-alpha-D-muramoyl-L-alanine + D-glutamate + ATP = UDP-N-acetyl-alpha-D-muramoyl-L-alanyl-D-glutamate + ADP + phosphate + H(+). It participates in cell wall biogenesis; peptidoglycan biosynthesis. In terms of biological role, cell wall formation. Catalyzes the addition of glutamate to the nucleotide precursor UDP-N-acetylmuramoyl-L-alanine (UMA). The sequence is that of UDP-N-acetylmuramoylalanine--D-glutamate ligase from Borreliella burgdorferi (strain ZS7) (Borrelia burgdorferi).